Here is a 286-residue protein sequence, read N- to C-terminus: Beta-lactamase SHV-3 (286 aa).

The N-terminal stretch at Met1–Ala21 is a signal peptide. Catalysis depends on Ser66, which acts as the Acyl-ester intermediate. A disulfide bridge links Cys73 with Cys119. Residue Glu164 is the Proton acceptor of the active site. Lys230–Gly232 provides a ligand contact to substrate.

This sequence belongs to the class-A beta-lactamase family.

It carries out the reaction a beta-lactam + H2O = a substituted beta-amino acid. Its function is as follows. This enzyme hydrolyzes cefotaxime, ceftazidime and other broad spectrum cephalosporins. This Klebsiella pneumoniae protein is Beta-lactamase SHV-3 (bla).